We begin with the raw amino-acid sequence, 1035 residues long: Cell-division control histidine kinase PdhS (1035 aa).

The tract at residues 1 to 613 is important for polar localization; sequence MSGSYPFIDI…HADGSEEPVD (613 aa). The segment at 500-533 is disordered; the sequence is QGLANTRAESETPVSETSSIEPVEPTPPVKTRSE. The interval 614-1035 is interaction with DivK; it reads AHLNAIAWRG…VFPPTRVLAD (422 aa). The 72-residue stretch at 659-730 folds into the PAS domain; that stretch reads HVEELKTILD…YLHGLSGNGV (72 aa). A Histidine kinase domain is found at 802–1031; sequence RISHEIRTPL…VVEIVFPPTR (230 aa). Position 805 is a phosphohistidine; by autocatalysis (histidine 805).

Interacts with DivK.

Its subcellular location is the cytoplasm. It catalyses the reaction ATP + protein L-histidine = ADP + protein N-phospho-L-histidine.. Functionally, functions as a polar differentiation marker. Essential protein that, by localizing in the old pole of dividing cells, controls cell division and maturation, probably through control of DivK phosphorylation status and cellular distribution, which in turn regulates CtrA, a transcriptional regulator of the minB operon. The asymmetrical localization of this protein is probably required for cells to enter a new division cycle. The protein is Cell-division control histidine kinase PdhS (pdhS) of Brucella suis biovar 1 (strain 1330).